The primary structure comprises 239 residues: Serine protease SplD (239 aa).

An N-terminal signal peptide occupies residues 1–36 (MNKNIIIKSIAALTILTSITGVGTTVVDGIQQTAKA). Catalysis depends on charge relay system residues His-75, Asp-114, and Ser-192.

Belongs to the peptidase S1B family.

It is found in the secreted. The polypeptide is Serine protease SplD (splD) (Staphylococcus aureus (strain COL)).